A 172-amino-acid chain; its full sequence is Galectin-related protein (172 aa).

Ala-2 is subject to N-acetylalanine. 2 positions are modified to phosphoserine: Ser-22 and Ser-25. One can recognise a Galectin domain in the interval 39 to 168; it reads PFCGHIKGGM…TIKINGDLQI (130 aa).

In terms of assembly, monomer.

Does not bind lactose, and may not bind carbohydrates. The sequence is that of Galectin-related protein (Lgalsl) from Mus musculus (Mouse).